The primary structure comprises 327 residues: L-lactate dehydrogenase (327 aa).

NAD(+) is bound by residues V18, D39, K44, Y69, and 83 to 84 (GA). Residues Q86, R92, and 124–127 (NPVD) contribute to the substrate site. Residues 122-124 (AAN) and S147 each bind NAD(+). A substrate-binding site is contributed by 152-155 (DSAR). The beta-D-fructose 1,6-bisphosphate site is built by R157 and H172. The active-site Proton acceptor is the H179. A Phosphotyrosine modification is found at Y224. T233 provides a ligand contact to substrate.

Belongs to the LDH/MDH superfamily. LDH family. In terms of assembly, homotetramer.

It is found in the cytoplasm. The catalysed reaction is (S)-lactate + NAD(+) = pyruvate + NADH + H(+). It functions in the pathway fermentation; pyruvate fermentation to lactate; (S)-lactate from pyruvate: step 1/1. Allosterically activated by fructose 1,6-bisphosphate (FBP). Catalyzes the conversion of lactate to pyruvate. The polypeptide is L-lactate dehydrogenase (Streptococcus equi subsp. equi (strain 4047)).